The chain runs to 153 residues: Superoxide dismutase [Cu-Zn] (153 aa).

Residues His45 and His47 each contribute to the Cu cation site. Thr53 is modified (phosphothreonine). Cysteines 56 and 145 form a disulfide. At Ser59 the chain carries Phosphoserine. A Cu cation-binding site is contributed by His62. 4 residues coordinate Zn(2+): His62, His70, His79, and Asp82. Position 119 (His119) interacts with Cu cation.

This sequence belongs to the Cu-Zn superoxide dismutase family. As to quaternary structure, homodimer. Requires Cu cation as cofactor. Zn(2+) serves as cofactor.

It localises to the cytoplasm. It carries out the reaction 2 superoxide + 2 H(+) = H2O2 + O2. Its function is as follows. Destroys radicals which are normally produced within the cells and which are toxic to biological systems. The chain is Superoxide dismutase [Cu-Zn] from Drosophila melanogaster (Fruit fly).